Consider the following 860-residue polypeptide: Leucine--tRNA ligase (860 aa).

The 'HIGH' region signature appears at 42 to 52 (PYPSGRLHMGH). The short motif at 619-623 (KMSKS) is the 'KMSKS' region element. Position 622 (lysine 622) interacts with ATP.

Belongs to the class-I aminoacyl-tRNA synthetase family.

Its subcellular location is the cytoplasm. The enzyme catalyses tRNA(Leu) + L-leucine + ATP = L-leucyl-tRNA(Leu) + AMP + diphosphate. The chain is Leucine--tRNA ligase from Serratia proteamaculans (strain 568).